Reading from the N-terminus, the 123-residue chain is Large ribosomal subunit protein eL8 (123 aa).

The protein belongs to the eukaryotic ribosomal protein eL8 family. As to quaternary structure, part of the 50S ribosomal subunit. Probably part of the RNase P complex.

The protein localises to the cytoplasm. Its function is as follows. Multifunctional RNA-binding protein that recognizes the K-turn motif in ribosomal RNA, the RNA component of RNase P, box H/ACA, box C/D and box C'/D' sRNAs. This Methanobrevibacter smithii (strain ATCC 35061 / DSM 861 / OCM 144 / PS) protein is Large ribosomal subunit protein eL8.